A 445-amino-acid polypeptide reads, in one-letter code: Putative ankyrin repeat protein L797 (445 aa).

ANK repeat units follow at residues 73–102 (FMED…DIYS), 285–314 (NHEH…ELVG), 315–344 (NLYI…DIRQ), and 346–375 (LDAF…IINI).

This chain is Putative ankyrin repeat protein L797, found in Acanthamoeba polyphaga (Amoeba).